Reading from the N-terminus, the 476-residue chain is Protein transport protein Sec61 subunit alpha (476 aa).

The Cytoplasmic segment spans residues glycine 2–leucine 33. The helical transmembrane segment at tryptophan 34–isoleucine 53 threads the bilayer. Residues methionine 54–leucine 76 are Lumenal-facing. Residues methionine 77–glycine 96 form a helical membrane-spanning segment. The Cytoplasmic segment spans residues alanine 97–lysine 117. Residues leucine 118–glycine 138 traverse the membrane as a helical segment. Over aspartate 139–glycine 144 the chain is Lumenal. The helical transmembrane segment at alanine 145–leucine 165 threads the bilayer. Over aspartate 166–glycine 172 the chain is Cytoplasmic. The helical transmembrane segment at tyrosine 173–tryptophan 193 threads the bilayer. The Lumenal portion of the chain corresponds to lysine 194 to proline 240. The chain crosses the membrane as a helical span at residues asparagine 241 to phenylalanine 261. The Cytoplasmic segment spans residues arginine 262–asparagine 288. A helical transmembrane segment spans residues isoleucine 289–serine 309. Residues threonine 310–valine 354 are Lumenal-facing. The helical transmembrane segment at leucine 355–phenylalanine 375 threads the bilayer. Over serine 376–alanine 420 the chain is Cytoplasmic. Residues alanine 421 to isoleucine 441 form a helical membrane-spanning segment. Residues glycine 442–threonine 445 are Lumenal-facing. Residues glycine 446–valine 462 form a helical membrane-spanning segment. Residues lysine 463–phenylalanine 476 lie on the Cytoplasmic side of the membrane.

It belongs to the SecY/SEC61-alpha family. As to quaternary structure, the SEC61 channel-forming translocon complex consists of channel-forming core components SEC61A1, SEC61B and SEC61G and different auxiliary components such as SEC62 and SEC63. The SEC61 channel associates with the multi-pass translocon (MPT) complex.

Its subcellular location is the endoplasmic reticulum membrane. In terms of biological role, component of SEC61 channel-forming translocon complex that mediates transport of signal peptide-containing precursor polypeptides across the endoplasmic reticulum (ER). Forms a ribosome receptor and a gated pore in the ER membrane, both functions required for cotranslational translocation of nascent polypeptides. May cooperate with auxiliary protein SEC62, SEC63 and HSPA5/BiP to enable post-translational transport of small presecretory proteins. The SEC61 channel is also involved in ER membrane insertion of transmembrane proteins: it mediates membrane insertion of the first few transmembrane segments of proteins, while insertion of subsequent transmembrane regions of multi-pass membrane proteins is mediated by the multi-pass translocon (MPT) complex. This is Protein transport protein Sec61 subunit alpha (sec61a) from Hemitripterus americanus (Sea raven).